Reading from the N-terminus, the 511-residue chain is Histidine ammonia-lyase (511 aa).

Residues 142-144 constitute a cross-link (5-imidazolinone (Ala-Gly)); it reads ASG. At S143 the chain carries 2,3-didehydroalanine (Ser).

Belongs to the PAL/histidase family. Contains an active site 4-methylidene-imidazol-5-one (MIO), which is formed autocatalytically by cyclization and dehydration of residues Ala-Ser-Gly.

It is found in the cytoplasm. It carries out the reaction L-histidine = trans-urocanate + NH4(+). It participates in amino-acid degradation; L-histidine degradation into L-glutamate; N-formimidoyl-L-glutamate from L-histidine: step 1/3. In Chelativorans sp. (strain BNC1), this protein is Histidine ammonia-lyase.